The chain runs to 537 residues: Actin-histidine N-methyltransferase (537 aa).

The span at 1-12 (MGKNTKRNKKTK) shows a compositional bias: basic residues. The interval 1–50 (MGKNTKRNKKTKQQQQQPQQNGVTASASGTAVEDFEDQQAASSLPSLNGK) is disordered. Residues Arg114, 143 to 145 (YQL), Arg299, 325 to 329 (DMANH), and 375 to 377 (NGF) contribute to the S-adenosyl-L-methionine site. In terms of domain architecture, SET spans 133-364 (EGLEIAIFPG…TGEQFFIYYG (232 aa)).

Belongs to the class V-like SAM-binding methyltransferase superfamily. SETD3 actin-histidine methyltransferase family.

It is found in the cytoplasm. It localises to the nucleus. The catalysed reaction is L-histidyl-[protein] + S-adenosyl-L-methionine = N(tele)-methyl-L-histidyl-[protein] + S-adenosyl-L-homocysteine + H(+). Functionally, protein-histidine N-methyltransferase that specifically mediates 3-methylhistidine (tele-methylhistidine) methylation of actin at 'His-74'. In Drosophila melanogaster (Fruit fly), this protein is Actin-histidine N-methyltransferase.